We begin with the raw amino-acid sequence, 522 residues long: MNASNNISKFPDLDNSSKLIDHILDSDDSEELDELPDISSLVPSARAQSRKQYLKNDSSNSSTYRWNIDLLSSTATIDDSVAKRRKLAVQNLLQYDSTQTFQTGDEIDELIGKSVGSNVLNVLRSNPIYDDDLRYEYCSNSKARVPDWNTLKAECLKDNDLEFNEGIIPTTFGDLLSAKLVPLDIALSICSLQFFRSLGDTTCSEWIANLEKIFYSYKSSSNNLNQIVRFIFETTADMIGIDLAKRQVPIQLERTSASENLKSNLKIKVINFLKCCGTLYRFSDDTVRFEMIQDACRILIDNQVGSFCKWQFSQFMELPISLNPDFLISNIHKVSESPRVWVTILSSLSRSCQKFRKKIAFTLFVGKQSKNDDSDFSSLCQRLDEISASCNNDYTTLLYQIRTFGYAVDEKHFKTNERLECLLEKLRKIDLTISGSTDHLLLSRCEVKDCIHRLFMVLYYLNTNSAPELERIIESDLPNNNKQKDRYFKDKTSNLSMKENKSFSAKKVKKGKKKNKRQAYKR.

Over residues 482–492 (KQKDRYFKDKT) the composition is skewed to basic and acidic residues. A disordered region spans residues 482–522 (KQKDRYFKDKTSNLSMKENKSFSAKKVKKGKKKNKRQAYKR). The segment covering 504-522 (SAKKVKKGKKKNKRQAYKR) has biased composition (basic residues).

Component of the smc5/smc6 complex which consists of two subcomplexes, smc5-smc6-nse2 and nse1-nse2-nse4. Interacts with nse5.

Its subcellular location is the nucleus. It localises to the chromosome. In terms of biological role, acts in a DNA repair pathway for removal of UV-induced DNA damage that is distinct from classical nucleotide excision repair and in repair of ionizing radiation damage. Functions in homologous recombination repair of DNA double strand breaks and in recovery of stalled replication forks. May prevent formation of excessive Holliday junctions or assist in their resolution. The chain is Non-structural maintenance of chromosome element 6 (nse6) from Schizosaccharomyces pombe (strain 972 / ATCC 24843) (Fission yeast).